A 342-amino-acid chain; its full sequence is Heparan sulfate glucosamine 3-O-sulfotransferase 6 (342 aa).

Residues 1 to 21 (MAGSGGLGGGAGGGQGAGAGQ) are disordered. The Cytoplasmic portion of the chain corresponds to 1-31 (MAGSGGLGGGAGGGQGAGAGQGAALRASRAP). Residues 32–49 (MLLVALVLGAYCLCALPG) traverse the membrane as a helical; Signal-anchor for type II membrane protein segment. At 50 to 342 (RCPPAARAPA…QMTGQDFGWG (293 aa)) the chain is on the lumenal side. The tract at residues 55–85 (ARAPAPAPAPSEPSSSVHRPGAPGLPLASGP) is disordered. Residues 66 to 85 (EPSSSVHRPGAPGLPLASGP) show a composition bias toward low complexity. A 3'-phosphoadenylyl sulfate-binding site is contributed by 100–104 (KGGTR). Substrate contacts are provided by residues 122–128 (EPHFFDR) and 153–156 (KTPS). Residues Arg181 and Ser189 each coordinate 3'-phosphoadenylyl sulfate. Residue 220–221 (WS) coordinates substrate. N-linked (GlcNAc...) asparagine glycosylation occurs at Asn281. A disulfide bridge links Cys288 with Cys300. 305-309 (KGRPH) is a binding site for 3'-phosphoadenylyl sulfate.

It belongs to the sulfotransferase 1 family.

The protein localises to the golgi apparatus membrane. It catalyses the reaction alpha-D-glucosaminyl-[heparan sulfate](n) + 3'-phosphoadenylyl sulfate = 3-sulfo-alpha-D-glucosaminyl-[heparan sulfate](n) + adenosine 3',5'-bisphosphate + H(+). Functionally, sulfotransferase that utilizes 3'-phospho-5'-adenylyl sulfate (PAPS) to catalyze the transfer of a sulfo group to heparan sulfate. The substrate-specific O-sulfation generates an enzyme-modified heparan sulfate which acts as a binding receptor to Herpes Simplex Virus-1 (HSV-1) and permits its entry. Unlike 3-OST-1, does not convert non-anticoagulant heparan sulfate to anticoagulant heparan sulfate. In Homo sapiens (Human), this protein is Heparan sulfate glucosamine 3-O-sulfotransferase 6 (HS3ST6).